The primary structure comprises 313 residues: Porphobilinogen deaminase (313 aa).

Residue cysteine 242 is modified to S-(dipyrrolylmethanemethyl)cysteine.

It belongs to the HMBS family. As to quaternary structure, monomer. Requires dipyrromethane as cofactor.

The enzyme catalyses 4 porphobilinogen + H2O = hydroxymethylbilane + 4 NH4(+). Its pathway is porphyrin-containing compound metabolism; protoporphyrin-IX biosynthesis; coproporphyrinogen-III from 5-aminolevulinate: step 2/4. Tetrapolymerization of the monopyrrole PBG into the hydroxymethylbilane pre-uroporphyrinogen in several discrete steps. The sequence is that of Porphobilinogen deaminase from Pseudomonas syringae pv. tomato (strain ATCC BAA-871 / DC3000).